Consider the following 258-residue polypeptide: MASSSAAMSLESISMTTLNNLSRNHQSHRSSLLGFSRSFQNLGISSNGPDFSSRSRSTTSKNLNVTRAFFWNWGKKTENSRPSKIQELNVYELNEGDRNSPAVLKLGKKPTELCLGDLVPFTNKLYTGDLKKRVGITAGLCVLIQHVPEKSGDRFEASYSFYFGDYGHLSVQGQYLTYEDTFLAVTGGSGIFEGAYGQVKLRQLVYPTKLFYTFYLKGLANDLPLELTGTAVTPSKDVKPAPEAKAMEPSGVISNFTN.

A chloroplast-targeting transit peptide spans 1-56; that stretch reads MASSSAAMSLESISMTTLNNLSRNHQSHRSSLLGFSRSFQNLGISSNGPDFSSRSR.

Belongs to the allene oxide cyclase family. In terms of tissue distribution, highly expressed in fully developed leaves.

It localises to the plastid. Its subcellular location is the chloroplast. The catalysed reaction is (9Z,13S,15Z)-12,13-epoxyoctadeca-9,11,15-trienoate = (9S,13S,15Z)-12-oxophyto-10,15-dienoate. Functionally, involved in the production of 12-oxo-phytodienoic acid (OPDA), a precursor of jasmonic acid. This is Allene oxide cyclase 3, chloroplastic (AOC3) from Arabidopsis thaliana (Mouse-ear cress).